We begin with the raw amino-acid sequence, 1429 residues long: Dicer-like protein 2 (1429 aa).

The 180-residue stretch at 21–200 folds into the Helicase ATP-binding domain; the sequence is MFEASLKGNI…TIEMNLNSVC (180 aa). 34-41 contacts ATP; that stretch reads MGTGSGKT. The DEAH box signature appears at 141–144; that stretch reads DEAH. The 167-residue stretch at 335 to 501 folds into the Helicase C-terminal domain; the sequence is ALISFLMSTE…EDRRRTEELR (167 aa). A Dicer dsRNA-binding fold domain is found at 528–622; sequence AMQHLVHFCD…LPLTKSREFT (95 aa). 2 RNase III domains span residues 874 to 1014 and 1056 to 1250; these read ATRL…IDGG and QENL…VDSG. Mg(2+) contacts are provided by Glu1095, Asp1236, and Glu1239.

The protein belongs to the helicase family. Dicer subfamily. The cofactor is Mg(2+). It depends on Mn(2+) as a cofactor.

Dicer-like endonuclease involved in cleaving double-stranded RNA in the RNA interference (RNAi) pathway. Produces 21 to 25 bp dsRNAs (siRNAs) which target the selective destruction of homologous RNAs leading to sequence-specific suppression of gene expression, called post-transcriptional gene silencing (PTGS). Part of a broad host defense response against viral infection and transposons. This chain is Dicer-like protein 2 (dcl2), found in Emericella nidulans (strain FGSC A4 / ATCC 38163 / CBS 112.46 / NRRL 194 / M139) (Aspergillus nidulans).